The chain runs to 286 residues: MEDKRQRARVQGGWATPTKSQSATQPASPARSRLSQTAGPAWRSKEQQQCDRQFVFKEPQLVVRAAPEPRVIDREGVYEISLSPTGVSRVCLYPGFVDLKEADWILEQLCKDVPWKQRMGIREDVTYPQPRLTAWYGELPYTYSRITMEPNPHWLPVLWTLKSRIEENTSHTFNSLLCNFYRDEKDSVDWHSDDEPSLGSCPVIASLSFGATRTFEMRKKPPPEENGDYTYVERVKIPLDHGTLLIMEGATQADWQHRVPKEYHSRQPRVNLTFRTVYPDPRGAPR.

Residues 1 to 46 are disordered; that stretch reads MEDKRQRARVQGGWATPTKSQSATQPASPARSRLSQTAGPAWRSKE. A compositionally biased stretch (polar residues) spans 17-38; the sequence is PTKSQSATQPASPARSRLSQTA. Substrate is bound by residues Trp-115 and 141 to 143; that span reads YTY. In terms of domain architecture, Fe2OG dioxygenase spans 172 to 278; it reads TFNSLLCNFY…RVNLTFRTVY (107 aa). At Leu-177 the chain carries (4R)-5-hydroxyleucine; alternate. The residue at position 177 (Leu-177) is a (4R)-5-oxoleucine; alternate. Residue 179 to 181 participates in 2-oxoglutarate binding; it reads NFY. Residues His-191 and Asp-193 each coordinate Fe cation. Asp-194 is a substrate binding site. His-257 lines the Fe cation pocket. Residues 269 to 275 and Arg-275 each bind 2-oxoglutarate; that span reads RVNLTFR.

This sequence belongs to the alkB family. In terms of assembly, interacts with the ASCC complex composed of ASCC1, ASCC2 and ASCC3. Interacts directly with ASCC3, and is thereby recruited to the ASCC complex. Interacts with OTUD4; the interaction is direct. Interacts with USP7 and USP9X. Fe(2+) is required as a cofactor. Ubiquitinated; undergoes 'Lys-48'-linked polyubiquitination. OTUD4 promotes USP7 and USP9X-dependent deubiquitination of 'Lys-48'-polyubiquitinated ALKBH3 promoting the repair of alkylated DNA lesions. Detected in testis, kidney, liver and heart.

It localises to the nucleus. The protein localises to the cytoplasm. The catalysed reaction is an N(1)-methyladenosine in mRNA + 2-oxoglutarate + O2 = an adenosine in mRNA + formaldehyde + succinate + CO2. It catalyses the reaction a methylated nucleobase within DNA + 2-oxoglutarate + O2 = a nucleobase within DNA + formaldehyde + succinate + CO2. It carries out the reaction an N(1)-methyl-2'-deoxyadenosine in single-stranded DNA + 2-oxoglutarate + O2 = a 2'-deoxyadenosine in single-stranded DNA + formaldehyde + succinate + CO2 + H(+). The enzyme catalyses an N(3)-methyl-2'-deoxycytidine in single-stranded DNA + 2-oxoglutarate + O2 = a 2'-deoxycytidine in single-stranded DNA + formaldehyde + succinate + CO2 + H(+). The catalysed reaction is a 3,N(4)-etheno-2'-deoxycytidine in single-stranded DNA + 2-oxoglutarate + O2 + H2O = a 2'-deoxycytidine in single-stranded DNA + glyoxal + succinate + CO2. Activated by ascorbate. Functionally, dioxygenase that mediates demethylation of DNA and RNA containing 1-methyladenosine (m1A). Repairs alkylated DNA containing 1-methyladenosine (m1A) and 3-methylcytosine (m3C) by oxidative demethylation. Has a strong preference for single-stranded DNA. Able to process alkylated m3C within double-stranded regions via its interaction with ASCC3, which promotes DNA unwinding to generate single-stranded substrate needed for ALKBH3. Can repair exocyclic 3,N4-ethenocytosine adducs in single-stranded DNA. Also acts on RNA. Demethylates N(1)-methyladenosine (m1A) RNA, an epigenetic internal modification of messenger RNAs (mRNAs) highly enriched within 5'-untranslated regions (UTRs) and in the vicinity of start codons. Requires molecular oxygen, alpha-ketoglutarate and iron. The sequence is that of Alpha-ketoglutarate-dependent dioxygenase alkB homolog 3 from Mus musculus (Mouse).